Here is a 319-residue protein sequence, read N- to C-terminus: RWD domain-containing protein 2B (319 aa).

The 125-residue stretch at 41-165 (SELDLLASMF…EWVREHASGY (125 aa)) folds into the RWD domain. Position 275 is a phosphoserine (Ser275).

This chain is RWD domain-containing protein 2B (RWDD2B), found in Pongo abelii (Sumatran orangutan).